The following is a 115-amino-acid chain: Large ribosomal subunit protein P2 (115 aa).

Position 1 is an N-acetylmethionine (methionine 1). Residues serine 17 and serine 19 each carry the phosphoserine modification. At lysine 21 the chain carries N6-acetyllysine; alternate. N6-succinyllysine; alternate is present on lysine 21. Over residues 76 to 90 (APGSAAPAAGSAPAA) the composition is skewed to low complexity. The segment at 76–115 (APGSAAPAAGSAPAAAEEKKEEKKEESEESDDDMGFGLFD) is disordered. Phosphoserine occurs at positions 79 and 86. A compositionally biased stretch (basic and acidic residues) spans 91-101 (AEEKKEEKKEE). A phosphoserine mark is found at serine 102 and serine 105.

The protein belongs to the eukaryotic ribosomal protein P1/P2 family. In terms of assembly, heterodimer with RPLP1 at the lateral ribosomal stalk of the large ribosomal subunit.

Functionally, plays an important role in the elongation step of protein synthesis. The polypeptide is Large ribosomal subunit protein P2 (RPLP2) (Bos taurus (Bovine)).